The sequence spans 128 residues: UPF0325 protein NT01EI_0832 (128 aa).

The protein belongs to the UPF0325 family.

This chain is UPF0325 protein NT01EI_0832, found in Edwardsiella ictaluri (strain 93-146).